Consider the following 185-residue polypeptide: Large ribosomal subunit protein bL25 (185 aa).

The protein belongs to the bacterial ribosomal protein bL25 family. CTC subfamily. In terms of assembly, part of the 50S ribosomal subunit; part of the 5S rRNA/L5/L18/L25 subcomplex. Contacts the 5S rRNA. Binds to the 5S rRNA independently of L5 and L18.

This is one of the proteins that binds to the 5S RNA in the ribosome where it forms part of the central protuberance. This is Large ribosomal subunit protein bL25 from Laribacter hongkongensis (strain HLHK9).